The primary structure comprises 117 residues: Large ribosomal subunit protein bL20c (117 aa).

The protein belongs to the bacterial ribosomal protein bL20 family.

The protein resides in the plastid. It is found in the chloroplast. Functionally, binds directly to 23S ribosomal RNA and is necessary for the in vitro assembly process of the 50S ribosomal subunit. It is not involved in the protein synthesizing functions of that subunit. The polypeptide is Large ribosomal subunit protein bL20c (Eucalyptus globulus subsp. globulus (Tasmanian blue gum)).